Here is a 536-residue protein sequence, read N- to C-terminus: Bifunctional purine biosynthesis protein PurH (536 aa).

The MGS-like domain occupies isoleucine 8–threonine 158.

Belongs to the PurH family.

The catalysed reaction is (6R)-10-formyltetrahydrofolate + 5-amino-1-(5-phospho-beta-D-ribosyl)imidazole-4-carboxamide = 5-formamido-1-(5-phospho-D-ribosyl)imidazole-4-carboxamide + (6S)-5,6,7,8-tetrahydrofolate. It carries out the reaction IMP + H2O = 5-formamido-1-(5-phospho-D-ribosyl)imidazole-4-carboxamide. It functions in the pathway purine metabolism; IMP biosynthesis via de novo pathway; 5-formamido-1-(5-phospho-D-ribosyl)imidazole-4-carboxamide from 5-amino-1-(5-phospho-D-ribosyl)imidazole-4-carboxamide (10-formyl THF route): step 1/1. The protein operates within purine metabolism; IMP biosynthesis via de novo pathway; IMP from 5-formamido-1-(5-phospho-D-ribosyl)imidazole-4-carboxamide: step 1/1. This Rhizobium meliloti (strain 1021) (Ensifer meliloti) protein is Bifunctional purine biosynthesis protein PurH.